A 67-amino-acid polypeptide reads, in one-letter code: Beta-defensin 123 (67 aa).

An N-terminal signal peptide occupies residues 1–20 (MKLLLLTLTVLLLLSQLTPG). 3 disulfide bridges follow: C25–C52, C32–C46, and C36–C53.

Belongs to the beta-defensin family. In terms of tissue distribution, abundant expression in the male reproductive tract only. Expressed abundantly in testis, while expression in epididymis decreased gradually from caput to cauda.

The protein resides in the secreted. Its function is as follows. Has antibacterial activity. The chain is Beta-defensin 123 (DEFB123) from Macaca mulatta (Rhesus macaque).